Here is a 149-residue protein sequence, read N- to C-terminus: 3-dehydroquinate dehydratase (149 aa).

The active-site Proton acceptor is Y26. Residues N77, H83, and D90 each coordinate substrate. H103 functions as the Proton donor in the catalytic mechanism. Substrate is bound by residues L104–S105 and R114.

It belongs to the type-II 3-dehydroquinase family. In terms of assembly, homododecamer.

The enzyme catalyses 3-dehydroquinate = 3-dehydroshikimate + H2O. It participates in metabolic intermediate biosynthesis; chorismate biosynthesis; chorismate from D-erythrose 4-phosphate and phosphoenolpyruvate: step 3/7. Functionally, catalyzes a trans-dehydration via an enolate intermediate. The polypeptide is 3-dehydroquinate dehydratase (Aliivibrio salmonicida (strain LFI1238) (Vibrio salmonicida (strain LFI1238))).